The chain runs to 887 residues: Valine--tRNA ligase (887 aa).

A 'HIGH' region motif is present at residues 47 to 57 (PNVTGALHMGH). Residues 527–531 (KMSKS) carry the 'KMSKS' region motif. Lys-530 serves as a coordination point for ATP. Residues 817–885 (LVNVEEEEKR…LLASLEKIRK (69 aa)) adopt a coiled-coil conformation.

The protein belongs to the class-I aminoacyl-tRNA synthetase family. ValS type 1 subfamily. As to quaternary structure, monomer.

The protein localises to the cytoplasm. It catalyses the reaction tRNA(Val) + L-valine + ATP = L-valyl-tRNA(Val) + AMP + diphosphate. Its function is as follows. Catalyzes the attachment of valine to tRNA(Val). As ValRS can inadvertently accommodate and process structurally similar amino acids such as threonine, to avoid such errors, it has a 'posttransfer' editing activity that hydrolyzes mischarged Thr-tRNA(Val) in a tRNA-dependent manner. The sequence is that of Valine--tRNA ligase from Geobacter sulfurreducens (strain ATCC 51573 / DSM 12127 / PCA).